The sequence spans 145 residues: Plastocyanin, chloroplastic (145 aa).

A chloroplast-targeting transit peptide spans M1–A47. In terms of domain architecture, Plastocyanin-like spans D48–Q145. Cu cation contacts are provided by H85, C130, H133, and M138.

This sequence belongs to the plastocyanin family. The cofactor is Cu(2+).

The protein resides in the plastid. It is found in the chloroplast thylakoid membrane. Participates in electron transfer between P700 and the cytochrome b6-f complex in photosystem I. This chain is Plastocyanin, chloroplastic (PETE), found in Chlamydomonas reinhardtii (Chlamydomonas smithii).